Consider the following 281-residue polypeptide: NADPH-dependent 7-cyano-7-deazaguanine reductase (281 aa).

Position 81–83 (81–83 (VES)) interacts with substrate. NADPH is bound at residue 83–84 (SK). The Thioimide intermediate role is filled by Cys-188. The active-site Proton donor is the Asp-195. 227–228 (HE) provides a ligand contact to substrate. 256–257 (RG) is a binding site for NADPH.

The protein belongs to the GTP cyclohydrolase I family. QueF type 2 subfamily. As to quaternary structure, homodimer.

It localises to the cytoplasm. The catalysed reaction is 7-aminomethyl-7-carbaguanine + 2 NADP(+) = 7-cyano-7-deazaguanine + 2 NADPH + 3 H(+). It participates in tRNA modification; tRNA-queuosine biosynthesis. Its function is as follows. Catalyzes the NADPH-dependent reduction of 7-cyano-7-deazaguanine (preQ0) to 7-aminomethyl-7-deazaguanine (preQ1). This chain is NADPH-dependent 7-cyano-7-deazaguanine reductase, found in Acidovorax ebreus (strain TPSY) (Diaphorobacter sp. (strain TPSY)).